The chain runs to 511 residues: Phospho-2-dehydro-3-deoxyheptonate aldolase 2, chloroplastic (511 aa).

Belongs to the class-II DAHP synthase family. In terms of tissue distribution, leaves, stems, tuber and roots.

It is found in the plastid. The protein localises to the chloroplast. It catalyses the reaction D-erythrose 4-phosphate + phosphoenolpyruvate + H2O = 7-phospho-2-dehydro-3-deoxy-D-arabino-heptonate + phosphate. It functions in the pathway metabolic intermediate biosynthesis; chorismate biosynthesis; chorismate from D-erythrose 4-phosphate and phosphoenolpyruvate: step 1/7. In Solanum tuberosum (Potato), this protein is Phospho-2-dehydro-3-deoxyheptonate aldolase 2, chloroplastic (SHKB).